Here is a 617-residue protein sequence, read N- to C-terminus: Chaperone protein HscA homolog (617 aa).

It belongs to the heat shock protein 70 family.

In terms of biological role, probable chaperone. Has a low intrinsic ATPase activity which is markedly stimulated by HscB. The sequence is that of Chaperone protein HscA homolog from Vibrio parahaemolyticus serotype O3:K6 (strain RIMD 2210633).